Here is a 229-residue protein sequence, read N- to C-terminus: 2,3-bisphosphoglycerate-dependent phosphoglycerate mutase (229 aa).

Substrate-binding positions include arginine 7–asparagine 14, threonine 20–glycine 21, arginine 59, glutamate 86–tyrosine 89, lysine 97, arginine 113–arginine 114, and glycine 182–asparagine 183. Histidine 8 functions as the Tele-phosphohistidine intermediate in the catalytic mechanism. The active-site Proton donor/acceptor is the glutamate 86.

This sequence belongs to the phosphoglycerate mutase family. BPG-dependent PGAM subfamily.

The enzyme catalyses (2R)-2-phosphoglycerate = (2R)-3-phosphoglycerate. It functions in the pathway carbohydrate degradation; glycolysis; pyruvate from D-glyceraldehyde 3-phosphate: step 3/5. Catalyzes the interconversion of 2-phosphoglycerate and 3-phosphoglycerate. This is 2,3-bisphosphoglycerate-dependent phosphoglycerate mutase from Listeria monocytogenes serotype 4b (strain F2365).